A 224-amino-acid chain; its full sequence is 2-C-methyl-D-erythritol 4-phosphate cytidylyltransferase (224 aa).

This sequence belongs to the IspD/TarI cytidylyltransferase family. IspD subfamily.

The catalysed reaction is 2-C-methyl-D-erythritol 4-phosphate + CTP + H(+) = 4-CDP-2-C-methyl-D-erythritol + diphosphate. It participates in isoprenoid biosynthesis; isopentenyl diphosphate biosynthesis via DXP pathway; isopentenyl diphosphate from 1-deoxy-D-xylulose 5-phosphate: step 2/6. Its function is as follows. Catalyzes the formation of 4-diphosphocytidyl-2-C-methyl-D-erythritol from CTP and 2-C-methyl-D-erythritol 4-phosphate (MEP). This Clostridium botulinum (strain Eklund 17B / Type B) protein is 2-C-methyl-D-erythritol 4-phosphate cytidylyltransferase.